A 310-amino-acid chain; its full sequence is tRNA uridine(34) hydroxylase (310 aa).

Residues 123 to 217 (ADPDVVVIDV…YLEKVPEDES (95 aa)) form the Rhodanese domain. Cysteine 177 serves as the catalytic Cysteine persulfide intermediate.

Belongs to the TrhO family.

The enzyme catalyses uridine(34) in tRNA + AH2 + O2 = 5-hydroxyuridine(34) in tRNA + A + H2O. Its function is as follows. Catalyzes oxygen-dependent 5-hydroxyuridine (ho5U) modification at position 34 in tRNAs. This Acaryochloris marina (strain MBIC 11017) protein is tRNA uridine(34) hydroxylase.